We begin with the raw amino-acid sequence, 421 residues long: NADH-quinone oxidoreductase subunit F (421 aa).

The disordered stretch occupies residues 1–25; sequence MLKEEDKIFTNLHGQQSHDLKSSKK. Residues 16 to 25 are compositionally biased toward basic and acidic residues; that stretch reads QSHDLKSSKK. 54-63 provides a ligand contact to NAD(+); it reads GRGGAGFSTG. 166–213 is a binding site for FMN; the sequence is GAGAYICGEETALLESLEGKKGMPRLKPPFPAGFGLYGCPTTINNVES. [4Fe-4S] cluster is bound by residues cysteine 344, cysteine 347, cysteine 350, and cysteine 390.

It belongs to the complex I 51 kDa subunit family. It depends on FMN as a cofactor. Requires [4Fe-4S] cluster as cofactor.

It carries out the reaction a quinone + NADH + 5 H(+)(in) = a quinol + NAD(+) + 4 H(+)(out). Its function is as follows. NDH-1 shuttles electrons from NADH, via FMN and iron-sulfur (Fe-S) centers, to quinones in the respiratory chain. Couples the redox reaction to proton translocation (for every two electrons transferred, four hydrogen ions are translocated across the cytoplasmic membrane), and thus conserves the redox energy in a proton gradient. In Rickettsia massiliae (strain Mtu5), this protein is NADH-quinone oxidoreductase subunit F (nuoF).